Here is a 256-residue protein sequence, read N- to C-terminus: MLRIADKTFDSHLFTGTGKFASSQLMVEAIRASGSQLVTLAMKRVDLRQHNDAILAPLIEAGVTLLPNTSGAKTAEEAIFAAQLAREALGTNWLKLEIHPDARWLLPDPIETLKAAEALVKQGFVVLPYCGADPVLCKRLEEVGCAAVMPLGAPIGSNQGLETKTMLEIIIQQATVPVVVDAGIGVPSHAAQALEMGADAVLVNTAIAVADDPVMMATAFRLAVEAGLLARQAVPGNRSTYASATSPLTGFLEALA.

Lys95 (schiff-base intermediate with DXP) is an active-site residue. Residues Gly156, 182-183, and 204-205 contribute to the 1-deoxy-D-xylulose 5-phosphate site; these read AG and NT.

It belongs to the ThiG family. Homotetramer. Forms heterodimers with either ThiH or ThiS.

It localises to the cytoplasm. It catalyses the reaction [ThiS sulfur-carrier protein]-C-terminal-Gly-aminoethanethioate + 2-iminoacetate + 1-deoxy-D-xylulose 5-phosphate = [ThiS sulfur-carrier protein]-C-terminal Gly-Gly + 2-[(2R,5Z)-2-carboxy-4-methylthiazol-5(2H)-ylidene]ethyl phosphate + 2 H2O + H(+). It functions in the pathway cofactor biosynthesis; thiamine diphosphate biosynthesis. Catalyzes the rearrangement of 1-deoxy-D-xylulose 5-phosphate (DXP) to produce the thiazole phosphate moiety of thiamine. Sulfur is provided by the thiocarboxylate moiety of the carrier protein ThiS. In vitro, sulfur can be provided by H(2)S. In Salmonella enteritidis PT4 (strain P125109), this protein is Thiazole synthase.